The following is a 271-amino-acid chain: MRNDVHLGHKARKRFGQNFLNDPYIIDGIVSAINPKPGQNLVEIGPGLGAITEPVGREVDKFTVIELDRDLAERLRNHPELASKLTIHEGDAMRFDFKQLVKPNNKLRVFGNLPYNISTPLMFHLFEFHRDIQDMHFMLQKEVVNRLAAGPGTKAYGRLTVMAQYYCKVVPVLEVPPSAFVPPPKVDSAVVRLVPYEDLPHPATSLEWLDRVVREGFNQRRKTVRNCYKGLAEPETLETLGINPGMRPENLTLAQFVALANWLDATHKTHA.

Asn18, Leu20, Gly45, Glu66, Asp91, and Asn112 together coordinate S-adenosyl-L-methionine.

Belongs to the class I-like SAM-binding methyltransferase superfamily. rRNA adenine N(6)-methyltransferase family. RsmA subfamily.

Its subcellular location is the cytoplasm. It carries out the reaction adenosine(1518)/adenosine(1519) in 16S rRNA + 4 S-adenosyl-L-methionine = N(6)-dimethyladenosine(1518)/N(6)-dimethyladenosine(1519) in 16S rRNA + 4 S-adenosyl-L-homocysteine + 4 H(+). Functionally, specifically dimethylates two adjacent adenosines (A1518 and A1519) in the loop of a conserved hairpin near the 3'-end of 16S rRNA in the 30S particle. May play a critical role in biogenesis of 30S subunits. In Vibrio cholerae serotype O1 (strain ATCC 39315 / El Tor Inaba N16961), this protein is Ribosomal RNA small subunit methyltransferase A.